The primary structure comprises 504 residues: ATP synthase subunit alpha 2 (504 aa).

169–176 lines the ATP pocket; sequence GDRQTGKT.

Belongs to the ATPase alpha/beta chains family. As to quaternary structure, F-type ATPases have 2 components, CF(1) - the catalytic core - and CF(0) - the membrane proton channel. CF(1) has five subunits: alpha(3), beta(3), gamma(1), delta(1), epsilon(1). CF(0) has three main subunits: a(1), b(2) and c(9-12). The alpha and beta chains form an alternating ring which encloses part of the gamma chain. CF(1) is attached to CF(0) by a central stalk formed by the gamma and epsilon chains, while a peripheral stalk is formed by the delta and b chains.

It localises to the cell membrane. It carries out the reaction ATP + H2O + 4 H(+)(in) = ADP + phosphate + 5 H(+)(out). In terms of biological role, produces ATP from ADP in the presence of a proton gradient across the membrane. The alpha chain is a regulatory subunit. This is ATP synthase subunit alpha 2 from Listeria welshimeri serovar 6b (strain ATCC 35897 / DSM 20650 / CCUG 15529 / CIP 8149 / NCTC 11857 / SLCC 5334 / V8).